The primary structure comprises 272 residues: Type III pantothenate kinase (272 aa).

Residue 6-13 coordinates ATP; it reads DVRNTHTV. Residue 109–112 coordinates substrate; the sequence is GADR. D111 serves as the catalytic Proton acceptor. A K(+)-binding site is contributed by D131. S134 is an ATP binding site. T186 contacts substrate.

It belongs to the type III pantothenate kinase family. As to quaternary structure, homodimer. The cofactor is NH4(+). K(+) serves as cofactor.

It is found in the cytoplasm. The catalysed reaction is (R)-pantothenate + ATP = (R)-4'-phosphopantothenate + ADP + H(+). It participates in cofactor biosynthesis; coenzyme A biosynthesis; CoA from (R)-pantothenate: step 1/5. In terms of biological role, catalyzes the phosphorylation of pantothenate (Pan), the first step in CoA biosynthesis. The chain is Type III pantothenate kinase from Mycobacterium bovis (strain BCG / Pasteur 1173P2).